The sequence spans 676 residues: Probable metal-nicotianamine transporter YSL6 (676 aa).

Transmembrane regions (helical) follow at residues 38–58 (ITIR…IITH), 62–82 (LTVG…FFFV), 110–130 (CVVA…LIAM), 154–174 (GLWW…FSLV), 276–296 (IVNC…WPFV), 321–341 (VFIA…KIIA), 392–412 (FAIA…PIIF), 413–433 (PPLK…LAFC), 452–472 (IGLF…AGLA), 510–530 (VGTA…WTAF), 561–581 (LPKH…IVNL), 604–624 (FYIG…LFVW), and 639–659 (VASG…ILSI).

This sequence belongs to the YSL (TC 2.A.67.2) family.

It is found in the membrane. Functionally, may be involved in the transport of nicotianamine-chelated metals. In Arabidopsis thaliana (Mouse-ear cress), this protein is Probable metal-nicotianamine transporter YSL6 (YSL6).